The sequence spans 482 residues: Dihydrolipoyllysine-residue acetyltransferase component of pyruvate dehydrogenase complex, mitochondrial (482 aa).

A mitochondrion-targeting transit peptide spans 1–28 (MSAFVRVVPRISRSSVLTRSLRLQLRCY). Residues 34–110 (HTIIGMPALS…PVNKPIAVYV (77 aa)) form the Lipoyl-binding domain. K75 carries the N6-lipoyllysine modification. The interval 122–170 (FKLEDSGSDSKTSTKAQPAEPQAEKKQEAPAEETKTSAPEAKKSDVAAP) is disordered. The span at 143 to 166 (QAEKKQEAPAEETKTSAPEAKKSD) shows a compositional bias: basic and acidic residues. Residues 175 to 212 (FASPLAKTIALEKGISLKDVHGTGPRGRITKADIESYL) form the Peripheral subunit-binding (PSBD) domain. The interval 214–251 (KSSKQSSQTSGAAAATPAAATSSTTAGSAPSPSSTASY) is disordered. The span at 217 to 250 (KQSSQTSGAAAATPAAATSSTTAGSAPSPSSTAS) shows a compositional bias: low complexity. Active-site residues include H455 and D459.

The protein belongs to the 2-oxoacid dehydrogenase family. In terms of assembly, eukaryotic pyruvate dehydrogenase (PDH) complexes are organized as a core consisting of the oligomeric dihydrolipoamide acetyl-transferase (E2), around which are arranged multiple copies of pyruvate dehydrogenase (E1), dihydrolipoamide dehydrogenase (E3) and protein X (E3BP) bound by non-covalent bonds. It depends on (R)-lipoate as a cofactor.

Its subcellular location is the mitochondrion matrix. It carries out the reaction N(6)-[(R)-dihydrolipoyl]-L-lysyl-[protein] + acetyl-CoA = N(6)-[(R)-S(8)-acetyldihydrolipoyl]-L-lysyl-[protein] + CoA. The pyruvate dehydrogenase complex catalyzes the overall conversion of pyruvate to acetyl-CoA and CO(2). In Saccharomyces cerevisiae (strain ATCC 204508 / S288c) (Baker's yeast), this protein is Dihydrolipoyllysine-residue acetyltransferase component of pyruvate dehydrogenase complex, mitochondrial (LAT1).